The primary structure comprises 93 residues: Transcription factor PRE3 (93 aa).

One can recognise a bHLH domain in the interval 6–61 (SRSRQSSGTSRISEDQINDLIIKLQQLLPELRDSRRSDKVSAARVLQDTCNYIRNL).

As to quaternary structure, homodimer. Interacts with BHLH 147, BHLH148, BHLH149, BHLH150 and IBH1. Interacts with SIEL. Expressed in root and shoot meristems, and young siliques. Low levels detected in all aerial tissues.

The protein localises to the nucleus. It localises to the cytoplasm. Its function is as follows. Atypical and probable non DNA-binding bHLH transcription factor required for MONOPTEROS-dependent root initiation in embryo. Promotes the correct definition of the hypophysis cell division plane. Transcriptionally controlled by MONOPTEROS. Moves from its site of synthesis in pro-embryos cells into the hypophysis. Regulates brassinosteroid (BR) signaling by sequestering negative BR signaling components. May function as positive regulator of gibberellin signaling. May play a role in the regulation of light signaling and possibly auxin signaling. This is Transcription factor PRE3 (PRE3) from Arabidopsis thaliana (Mouse-ear cress).